Here is a 542-residue protein sequence, read N- to C-terminus: Probable serine/threonine-protein kinase ndrB (542 aa).

Positions 1–52 (MNVERKLESLSLQQQQQEEQQDESEQPNQGVEDEEEEEYDEEEYEEEEEDIN) are disordered. Over residues 9–18 (SLSLQQQQQE) the composition is skewed to low complexity. Over residues 19–51 (EQQDESEQPNQGVEDEEEEEYDEEEYEEEEEDI) the composition is skewed to acidic residues. A Protein kinase domain is found at 130 to 437 (FESIRIIGRG…VEEIQSHPFF (308 aa)). Residues 136–144 (IGRGAFGEV) and K159 contribute to the ATP site. Residue D258 is the Proton acceptor of the active site. The region spanning 438 to 510 (KGVDWRRLRE…RNFDAMRDAF (73 aa)) is the AGC-kinase C-terminal domain. A disordered region spans residues 452-486 (IIPQLSSPTDTSNFDHYEEEQQPEPMQPVQSKSRR). Polar residues predominate over residues 455 to 465 (QLSSPTDTSNF).

Belongs to the protein kinase superfamily. AGC Ser/Thr protein kinase family.

The protein resides in the cytoplasm. The enzyme catalyses L-seryl-[protein] + ATP = O-phospho-L-seryl-[protein] + ADP + H(+). It catalyses the reaction L-threonyl-[protein] + ATP = O-phospho-L-threonyl-[protein] + ADP + H(+). In Dictyostelium discoideum (Social amoeba), this protein is Probable serine/threonine-protein kinase ndrB (ndrB).